Here is a 344-residue protein sequence, read N- to C-terminus: Succinylglutamate desuccinylase (344 aa).

Zn(2+)-binding residues include histidine 63, glutamate 66, and histidine 160. Glutamate 224 is a catalytic residue.

The protein belongs to the AspA/AstE family. Succinylglutamate desuccinylase subfamily. Zn(2+) serves as cofactor.

The enzyme catalyses N-succinyl-L-glutamate + H2O = L-glutamate + succinate. It participates in amino-acid degradation; L-arginine degradation via AST pathway; L-glutamate and succinate from L-arginine: step 5/5. In terms of biological role, transforms N(2)-succinylglutamate into succinate and glutamate. This chain is Succinylglutamate desuccinylase, found in Shewanella sp. (strain W3-18-1).